A 343-amino-acid polypeptide reads, in one-letter code: N-acetyl-gamma-glutamyl-phosphate reductase (343 aa).

Cys-147 is an active-site residue.

This sequence belongs to the NAGSA dehydrogenase family. Type 1 subfamily.

Its subcellular location is the cytoplasm. The enzyme catalyses N-acetyl-L-glutamate 5-semialdehyde + phosphate + NADP(+) = N-acetyl-L-glutamyl 5-phosphate + NADPH + H(+). It participates in amino-acid biosynthesis; L-arginine biosynthesis; N(2)-acetyl-L-ornithine from L-glutamate: step 3/4. Its function is as follows. Catalyzes the NADPH-dependent reduction of N-acetyl-5-glutamyl phosphate to yield N-acetyl-L-glutamate 5-semialdehyde. The sequence is that of N-acetyl-gamma-glutamyl-phosphate reductase from Listeria monocytogenes serovar 1/2a (strain ATCC BAA-679 / EGD-e).